Consider the following 163-residue polypeptide: Cytochrome b6-f complex subunit 4 (163 aa).

Helical transmembrane passes span 36–56 (LLYI…GLAV), 95–115 (LLGV…PFLE), and 131–151 (TVFL…TLPI).

It belongs to the cytochrome b family. PetD subfamily. In terms of assembly, the 4 large subunits of the cytochrome b6-f complex are cytochrome b6, subunit IV (17 kDa polypeptide, petD), cytochrome f and the Rieske protein, while the 4 small subunits are petG, petL, petM and petN. The complex functions as a dimer.

The protein resides in the plastid. It is found in the chloroplast thylakoid membrane. Functionally, component of the cytochrome b6-f complex, which mediates electron transfer between photosystem II (PSII) and photosystem I (PSI), cyclic electron flow around PSI, and state transitions. In Drimys granadensis, this protein is Cytochrome b6-f complex subunit 4.